A 425-amino-acid polypeptide reads, in one-letter code: Serine--tRNA ligase (425 aa).

228 to 230 (TAE) contacts L-serine. An ATP-binding site is contributed by 259–261 (RSE). Residue Glu-282 participates in L-serine binding. Residue 346–349 (EIAS) coordinates ATP. Position 382 (Ser-382) interacts with L-serine.

The protein belongs to the class-II aminoacyl-tRNA synthetase family. Type-1 seryl-tRNA synthetase subfamily. Homodimer. The tRNA molecule binds across the dimer.

The protein localises to the cytoplasm. The catalysed reaction is tRNA(Ser) + L-serine + ATP = L-seryl-tRNA(Ser) + AMP + diphosphate + H(+). The enzyme catalyses tRNA(Sec) + L-serine + ATP = L-seryl-tRNA(Sec) + AMP + diphosphate + H(+). The protein operates within aminoacyl-tRNA biosynthesis; selenocysteinyl-tRNA(Sec) biosynthesis; L-seryl-tRNA(Sec) from L-serine and tRNA(Sec): step 1/1. Functionally, catalyzes the attachment of serine to tRNA(Ser). Is also able to aminoacylate tRNA(Sec) with serine, to form the misacylated tRNA L-seryl-tRNA(Sec), which will be further converted into selenocysteinyl-tRNA(Sec). This chain is Serine--tRNA ligase, found in Rickettsia prowazekii (strain Madrid E).